A 295-amino-acid polypeptide reads, in one-letter code: Oxidoreductase AN1597 (295 aa).

It belongs to the asaB hydroxylase/desaturase family.

It functions in the pathway secondary metabolite biosynthesis; terpenoid biosynthesis. Its function is as follows. Oxidoreductase; part of the gene cluster that mediates the biosynthesis of the diterpene ent-pimara-8(14),15-diene (PD). Within the cluster, the HMG-CoA reductase AN1593 functions in the mevalonate pathway, which produces isoprenoid precursors. The geranylgeranyl pyrophosphate (GGPP) synthase AN1592 is needed in the formation of GGPP, the precursor for diterpenes. Lastly, the pimaradiene synthase pbcA performs the 2 cyclization steps that convert GGPP to ent-pimara-8(14),15-diene. The putative roles of the remaining cluster enzymes in ent-pimara-8(14),15-diene biosynthesis is unclear. The cytochrome P450 monooxygenase AN1598, the glutathione S-transferase AN1595, the oxidoreductases AN1596 and AN1597 probably function as decorative enzymes. It is possible that in biological conditions the compound is oxidized to ent-pimara-8(14),15-dien-19-oic acid, which is a bioactive diterpene compound predominant in many plant extracts. The chain is Oxidoreductase AN1597 from Emericella nidulans (strain FGSC A4 / ATCC 38163 / CBS 112.46 / NRRL 194 / M139) (Aspergillus nidulans).